Consider the following 2529-residue polypeptide: Zinc finger FYVE domain-containing protein 26 (2529 aa).

Disordered regions lie at residues 584-650 (HLPE…PGPH), 689-709 (SSHR…SAAR), and 733-810 (VTSN…RFQT). Phosphoserine occurs at positions 605 and 609. The span at 689-701 (SSHRTPEETKLPE) shows a compositional bias: basic and acidic residues. Positions 755–765 (SSLRRGRRTRR) are enriched in basic residues. Residues 778 to 796 (SLEGTSSELSTSTSEGSLS) are compositionally biased toward low complexity. Serine 791 bears the Phosphoserine mark. Polar residues predominate over residues 797 to 810 (AVSGQVESDSRFQT). Residues 859–884 (MFVERYQEVIQELARVEHKIENQNSD) are a coiled coil. The segment at 1258–1286 (GLPLSTLGSPRPSENPSAERKSHSSPKDS) is disordered. Over residues 1263 to 1273 (TLGSPRPSENP) the composition is skewed to polar residues. A compositionally biased stretch (basic and acidic residues) spans 1274–1283 (SAERKSHSSP). A coiled-coil region spans residues 1488–1515 (VSDMAVQEELKSELQRKLMELRVYQKIL). 4 positions are modified to phosphoserine: serine 1732, serine 1754, serine 1770, and serine 1772. The interval 1762–1799 (APGSALVRSPSPKERAFPQTQPPVEFVPPETPPARDQW) is disordered. The FYVE-type zinc finger occupies 1802–1862 (DETESVCMVC…VCDQCYSYYN (61 aa)). Zn(2+)-binding residues include cysteine 1808, cysteine 1811, cysteine 1825, cysteine 1828, cysteine 1833, cysteine 1836, cysteine 1854, and cysteine 1857. Residues 1865–1884 (TPEESPCQSEVPDSAKNESP) form a disordered region.

This sequence belongs to the ZFYVE26 family. In terms of assembly, interacts with AP5Z1, AP5B1, AP5S1 and SPG11. Interacts with TTC19 and KIF13A.

The protein localises to the cytoplasm. Its subcellular location is the cytoskeleton. The protein resides in the microtubule organizing center. It localises to the centrosome. It is found in the midbody. Functionally, phosphatidylinositol 3-phosphate-binding protein required for the abscission step in cytokinesis: recruited to the midbody during cytokinesis and acts as a regulator of abscission. May also be required for efficient homologous recombination DNA double-strand break repair. This is Zinc finger FYVE domain-containing protein 26 (Zfyve26) from Mus musculus (Mouse).